The chain runs to 114 residues: Lectin MVL (114 aa).

The stretch at 2-55 (ASYKVNIPAGPLWSNAEAQQVGPKIAAAHQGNFTGQWTTVVESAMSVVEVELQV) is repeat 1. A carbohydrate-binding positions include 12 to 16 (PLWSN), Gln20, and 36 to 44 (GQWTTVVES). Residues 56–60 (ENTGI) form a linker region. Repeat 2 spans residues 61–114 (HEFKTDVLAGPLWSNDEAQKLGPQIAASYGAEFTGQWRTIVEGVMSVIQIKYTF). Residues 71–75 (PLWSN), Gln79, and 95–103 (GQWRTIVEG) each bind a carbohydrate.

Homodimer.

It localises to the cytoplasm. Its function is as follows. Carbohydrate-binding protein that binds oligomannosides such as Man(6)GlcNAc(2) with sub-micromolar affinities. The specificity of MVL is unique in that its minimal target comprises the Man-alpha-(1-&gt;6)-Man-beta-(1-&gt;4)-GlcNAc-beta-(1-&gt;4)-GlcNAc tetrasaccharide core (Man(2)A) found in N-linked oligomannosides. Displays hemagglutininating activity on rabbit, horse and hen erythrocytes. This activity is inhibited by yeast mannan. Does not bind mono- and disaccharides. Inhibits HIV-1 envelope-mediated cell fusion at nanomolar concentrations through carbohydrate-mediated interactions with high-mannose residues on the surface of the HIV envelope glycoprotein gp120. Unexpectedly for a lectin, one of the 2 oligomannose binding sites of MVL can catalyze the cleavage of chitin fragments (such as chitotriose, i.e. GlcNAc(3) or GlcNAc-beta-(1-&gt;4)-GlcNAcbeta-(1-&gt;4)-GlcNAc, and chitotetraose, i.e. GlcNAc(4)) to GlcNAc. This weak beta-1,4-glycosidase activity is restricted to the C-terminal carbohydrate-binding site. Does not cleave Man(3)GlcNAc(2) or the tetrasaccharide Man(2)A. This chain is Lectin MVL (mvl), found in Microcystis viridis (Polycystis viridis).